The primary structure comprises 453 residues: Methylenetetrahydrofolate--tRNA-(uracil-5-)-methyltransferase TrmFO (453 aa).

10-15 (GGGLAG) contributes to the FAD binding site. The interval 433–453 (ELAPWIDSAPPTAVPAAPAAG) is disordered. Over residues 441 to 453 (APPTAVPAAPAAG) the composition is skewed to low complexity.

This sequence belongs to the MnmG family. TrmFO subfamily. The cofactor is FAD.

The protein localises to the cytoplasm. It carries out the reaction uridine(54) in tRNA + (6R)-5,10-methylene-5,6,7,8-tetrahydrofolate + NADH + H(+) = 5-methyluridine(54) in tRNA + (6S)-5,6,7,8-tetrahydrofolate + NAD(+). It catalyses the reaction uridine(54) in tRNA + (6R)-5,10-methylene-5,6,7,8-tetrahydrofolate + NADPH + H(+) = 5-methyluridine(54) in tRNA + (6S)-5,6,7,8-tetrahydrofolate + NADP(+). Catalyzes the folate-dependent formation of 5-methyl-uridine at position 54 (M-5-U54) in all tRNAs. The protein is Methylenetetrahydrofolate--tRNA-(uracil-5-)-methyltransferase TrmFO of Anaeromyxobacter dehalogenans (strain 2CP-1 / ATCC BAA-258).